We begin with the raw amino-acid sequence, 173 residues long: Alpha-crystallin A chain (173 aa).

N-acetylmethionine is present on Met1. The segment at 1-63 is required for complex formation with BFSP1 and BFSP2; during homooligomerization, mediates the association of 2 dimers to form a tetramer; that stretch reads MDVTIQHPWF…RTVLDSGISE (63 aa). A Deamidated glutamine; partial modification is found at Gln6. The residue at position 45 (Ser45) is a Phosphoserine. Gln50 carries the deamidated glutamine; partial modification. One can recognise a sHSP domain in the interval 52 to 164; it reads LFRTVLDSGI…AERAIPVSRE (113 aa). An N6-acetyllysine modification is found at Lys70. Gln90 carries the post-translational modification Deamidated glutamine; partial. Position 99 is an N6-acetyllysine (Lys99). His100 provides a ligand contact to Zn(2+). The residue at position 101 (Asn101) is a Deamidated asparagine; partial. Residues Glu102 and His107 each contribute to the Zn(2+) site. Ser122 is modified (phosphoserine). Asn123 bears the Deamidated asparagine; partial mark. A disulfide bridge links Cys131 with Cys142. Residue Gln147 is modified to Deamidated glutamine; partial. His154 is a Zn(2+) binding site. Ser162 is a glycosylation site (O-linked (GlcNAc) serine).

The protein belongs to the small heat shock protein (HSP20) family. As to quaternary structure, heteropolymer composed of three CRYAA and one CRYAB subunits. Inter-subunit bridging via zinc ions enhances stability, which is crucial as there is no protein turn over in the lens. Can also form homodimers and homotetramers (dimers of dimers) which serve as the building blocks of homooligomers. Within homooligomers, the zinc-binding motif is created from residues of 3 different molecules. His-100 and Glu-102 from one molecule are ligands of the zinc ion, and His-107 and His-154 residues from additional molecules complete the site with tetrahedral coordination geometry. Part of a complex required for lens intermediate filament formation composed of BFSP1, BFSP2 and CRYAA. O-glycosylated; contains N-acetylglucosamine side chains. In terms of processing, deamidation of Asn-101 in lens occurs mostly during the first 30 years of age, followed by a small additional amount of deamidation (approximately 5%) during the next approximately 38 years, resulting in a maximum of approximately 50% deamidation during the lifetime of the individual. Post-translationally, phosphorylation on Ser-122 seems to be developmentally regulated. Absent in the first months of life, it appears during the first 12 years of human lifetime. The relative amount of phosphorylated form versus unphosphorylated form does not change over the lifetime of the individual. Acetylation at Lys-70 may increase chaperone activity. In terms of processing, undergoes age-dependent proteolytical cleavage at the C-terminus. Alpha-crystallin A(1-172) is the most predominant form produced most rapidly during the first 12 years of age and after this age is present in approximately 50% of the lens molecules. Post-translationally, in young individuals and during the first approximately 30 years of life, less than half molecules contain an intramolecular disulfide bond (oxidized form), while in the remaining fraction the cysteines are in the free sulfhydryl form (reduced form). With aging, the amount of oxidized form increases up to 90% and it becomes a major constituent of high molecular weight aggregates, concomitant with an age-dependent loss of its chaperone activity. The reduced form is undetectable in cataractous lenses. Expressed in the eye lens (at protein level).

Its subcellular location is the cytoplasm. The protein localises to the nucleus. Contributes to the transparency and refractive index of the lens. In its oxidized form (absence of intramolecular disulfide bond), acts as a chaperone, preventing aggregation of various proteins under a wide range of stress conditions. Required for the correct formation of lens intermediate filaments as part of a complex composed of BFSP1, BFSP2 and CRYAA. The protein is Alpha-crystallin A chain (CRYAA) of Homo sapiens (Human).